The primary structure comprises 271 residues: N-acetyltransferase ECO1 (271 aa).

The CCHH-type zinc finger occupies 26-50; sequence VKCPKCSITYSTNSPSDLVQHKRYH. The 163-residue stretch at 109-271 folds into the N-acetyltransferase domain; the sequence is VMISPKKANE…SGKLLIPCYI (163 aa).

It belongs to the acetyltransferase family. ECO subfamily.

It localises to the nucleus. In terms of biological role, probable acetyltransferase required for the establishment of sister chromatid cohesion and couple the processes of cohesion and DNA replication to ensure that only sister chromatids become paired together. In contrast to the structural cohesins, the deposition and establishment factors are required only during S phase. Acts by acetylating the cohesin complex component SMC3. In Kluyveromyces lactis (strain ATCC 8585 / CBS 2359 / DSM 70799 / NBRC 1267 / NRRL Y-1140 / WM37) (Yeast), this protein is N-acetyltransferase ECO1 (ECO1).